Reading from the N-terminus, the 586-residue chain is GRB2-associated-binding protein 3 (586 aa).

Residues 5–117 form the PH domain; the sequence is DAVCTGWLVK…WVHSISQVCN (113 aa). 2 disordered regions span residues 149–171 and 281–335; these read AHAA…TEET and SSTI…KKPE. Residues 283-292 show a composition bias toward polar residues; it reads TIQVDKNQGS. A compositionally biased stretch (basic and acidic residues) spans 316–326; sequence HLSERRQEEWS. Position 344 is a phosphoserine (Ser344). A disordered region spans residues 401–453; it reads GASGLGPHCSPDDYIPMNSGSISSPLPELPANLEPPPVNRDLKPQRKSRPPPL. Ser482 bears the Phosphoserine mark.

The protein belongs to the GAB family. As to quaternary structure, interacts with PIK3R/p85, SHP2 and GRAP2/MONA. May interact with Grb2. In terms of processing, phosphorylated on tyrosine residue(s) after macrophage colony-stimulating factor (M-CSF) receptor stimulation.

This is GRB2-associated-binding protein 3 (GAB3) from Homo sapiens (Human).